The sequence spans 63 residues: Large ribosomal subunit protein bL28A (63 aa).

Belongs to the bacterial ribosomal protein bL28 family.

The polypeptide is Large ribosomal subunit protein bL28A (Nocardia farcinica (strain IFM 10152)).